Here is a 748-residue protein sequence, read N- to C-terminus: ATP-dependent RNA helicase DRS1 (748 aa).

Disordered stretches follow at residues 1–72 (MAVK…PEFQ) and 111–211 (RKGG…EDTK). Acidic residues predominate over residues 18 to 32 (DSEEDVPDLDASDDE). The segment covering 38–52 (VKSSKTKNKSKKKAK) has biased composition (basic residues). Residues 58-67 (HLDEDVHEDL) are compositionally biased toward basic and acidic residues. 3 stretches are compositionally biased toward acidic residues: residues 124 to 153 (DAEESLSEESEEEPEEGDEPGESDDEDELA), 168 to 185 (ENEEDEEDEEEEDDDEDD), and 202 to 211 (EDEDIEEDTK). Residues 233-261 (KTFNSLSLSRPVLKGLGSLGYTSPSPIQS) carry the Q motif motif. The 176-residue stretch at 264–439 (IPIALLGKDI…SLSLKKPVRI (176 aa)) folds into the Helicase ATP-binding domain. 277–284 (AVTGSGKT) serves as a coordination point for ATP. The DEAD box signature appears at 387-390 (DEAD). Residues 468 to 628 (LLYQLIRKLD…TQVEQVNSLI (161 aa)) enclose the Helicase C-terminal domain. A coiled-coil region spans residues 632–667 (GDVVEEIIEEEKQEKEILRAEMELRKGENMLKHKEE). Residues 687 to 748 (KMLQVLAKNK…YGKKGKKGKK (62 aa)) are disordered. Residues 694 to 705 (KNKKPINSKKRK) are compositionally biased toward basic residues. Basic and acidic residues predominate over residues 720-732 (TQKDRVEYQERQY).

It belongs to the DEAD box helicase family. DDX27/DRS1 subfamily. In terms of assembly, associates with pre-ribosomal particles.

It localises to the nucleus. The protein resides in the nucleolus. It catalyses the reaction ATP + H2O = ADP + phosphate + H(+). Functionally, ATP-binding RNA helicase involved in ribosome assembly. The protein is ATP-dependent RNA helicase DRS1 (DRS1) of Kluyveromyces lactis (strain ATCC 8585 / CBS 2359 / DSM 70799 / NBRC 1267 / NRRL Y-1140 / WM37) (Yeast).